The following is a 681-amino-acid chain: Sodium/glucose cotransporter 4 (681 aa).

At 1-36 the chain is on the extracellular side; it reads MSKELAAMGPGASGDGVRTETAPHIALDSRVGLHAY. A helical membrane pass occupies residues 37–57; sequence DISVVVIYFVFVIAVGIWSSI. Topologically, residues 58 to 75 are cytoplasmic; sequence RASRGTIGGYFLAGRSMS. Residues 76–98 traverse the membrane as a helical segment; the sequence is WWPIGASLMSSNVGSGLFIGLAG. Over 99–114 the chain is Extracellular; the sequence is TGAAGGLAVGGFEWNA. Residues 115-135 form a helical membrane-spanning segment; that stretch reads TWLLLALGWVFVPVYIAAGVV. Over 136–157 the chain is Cytoplasmic; that stretch reads TMPQYLKKRFGGQRIQVYMSVL. Residues 158-178 traverse the membrane as a helical segment; that stretch reads SLILYIFTKISTDIFSGALFI. The Extracellular portion of the chain corresponds to 179-190; it reads QMALGWNLYLST. A helical transmembrane segment spans residues 191-211; sequence GILLVVTAVYTIAGGLMAVIY. Residues 212–217 are Cytoplasmic-facing; the sequence is TDALQT. A helical membrane pass occupies residues 218-238; that stretch reads VIMVGGALVLMFLGFQDVGWY. Residues 239 to 275 are Extracellular-facing; that stretch reads PGLEQRYRQAIPNVTVPNTTCHLPRPDAFHILRDPVS. N251 is a glycosylation site (N-linked (GlcNAc...) asparagine). Residues 276-296 form a helical membrane-spanning segment; sequence GDIPWPGLIFGLTVLATWCWC. The Cytoplasmic segment spans residues 297–317; that stretch reads TDQVIVQRSLSAKSLSHAKGG. A helical transmembrane segment spans residues 318-338; the sequence is SVLGGYLKILPMFFIVMPGMI. Topologically, residues 339–383 are extracellular; that stretch reads SRALFPDEVGCVDPDVCQRICGARVGCSNIAYPKLVMALMPVGLR. Residues 384–406 traverse the membrane as a helical segment; that stretch reads GLMIAVIMAALMSSLTSIFNSSS. Topologically, residues 407–427 are cytoplasmic; the sequence is TLFTIDVWQRFRRKSTEQELM. The chain crosses the membrane as a helical span at residues 428 to 448; that stretch reads VVGRVFVVFLVVISILWIPII. Residues 449–459 are Extracellular-facing; that stretch reads QSSNSGQLFDY. Residues 460 to 480 traverse the membrane as a helical segment; it reads IQAVTSYLAPPITALFLLAIF. The Cytoplasmic segment spans residues 481 to 487; that stretch reads CKRVTEP. Residues 488–508 form a helical membrane-spanning segment; the sequence is GAFWGLVFGLGVGLLRMILEF. Residues 509–530 are Extracellular-facing; sequence SYPAPACGEVDRRPAVLKDFHY. A helical membrane pass occupies residues 531–551; that stretch reads LYFAILLCGLTAIVIVIVSLC. The Cytoplasmic segment spans residues 552 to 660; sequence TTPIPEEQLT…SIEEEPLWRH (109 aa). The span at 579–591 shows a compositional bias: basic and acidic residues; it reads AHESTPEISERPA. The disordered stretch occupies residues 579 to 614; that stretch reads AHESTPEISERPAGECPAGGGAAENSSLGQEQPEAP. Residues S604 and S605 each carry the phosphoserine modification. The helical transmembrane segment at 661-681 threads the bilayer; sequence VCNINAVLLLAINIFLWGYFA.

This sequence belongs to the sodium:solute symporter (SSF) (TC 2.A.21) family. Expressed in the small intestine, kidney and liver.

It is found in the cell membrane. The enzyme catalyses D-mannose(out) + n Na(+)(out) = D-mannose(in) + n Na(+)(in). Electrogenic Na(+)-coupled sugar symporter that may play a primary role in D-mannose and possibly D-fructose and D-glucose transport at the plasma membrane. Transporter activity is driven by a transmembrane Na(+) electrochemical gradient set by the Na(+)/K(+) pump. Exclusively recognizes sugar substrates having a pyranose ring with an axial hydroxyl group on carbon 2. This is Sodium/glucose cotransporter 4 from Homo sapiens (Human).